The following is a 142-amino-acid chain: uncharacterized protein (142 aa).

A signal peptide spans methionine 1 to alanine 26.

This is an uncharacterized protein from Schizosaccharomyces pombe (strain 972 / ATCC 24843) (Fission yeast).